A 297-amino-acid polypeptide reads, in one-letter code: ER membrane protein complex subunit 2-A (297 aa).

TPR repeat units follow at residues 87–120 (HRVK…DPTN), 155–188 (QEAW…NPHN), and 192–225 (YQQF…NNHN).

Belongs to the EMC2 family. In terms of assembly, component of the ER membrane protein complex (EMC).

The protein localises to the endoplasmic reticulum membrane. Functionally, part of the endoplasmic reticulum membrane protein complex (EMC) that enables the energy-independent insertion into endoplasmic reticulum membranes of newly synthesized membrane proteins. Preferentially accommodates proteins with transmembrane domains that are weakly hydrophobic or contain destabilizing features such as charged and aromatic residues. Involved in the cotranslational insertion of multi-pass membrane proteins in which stop-transfer membrane-anchor sequences become ER membrane spanning helices. It is also required for the post-translational insertion of tail-anchored/TA proteins in endoplasmic reticulum membranes. By mediating the proper cotranslational insertion of N-terminal transmembrane domains in an N-exo topology, with translocated N-terminus in the lumen of the ER, controls the topology of multi-pass membrane proteins. By regulating the insertion of various proteins in membranes, it is indirectly involved in many cellular processes. In Xenopus laevis (African clawed frog), this protein is ER membrane protein complex subunit 2-A (emc2-a).